Here is a 357-residue protein sequence, read N- to C-terminus: Alkanal monooxygenase alpha chain (357 aa).

Belongs to the bacterial luciferase oxidoreductase family. In terms of assembly, heterodimer of an alpha and a beta chain.

It catalyses the reaction a long-chain fatty aldehyde + FMNH2 + O2 = a long-chain fatty acid + hnu + FMN + H2O + 2 H(+). In terms of biological role, light-emitting reaction in luminous bacteria. This Kryptophanaron alfredi symbiont protein is Alkanal monooxygenase alpha chain (luxA).